The following is a 1029-amino-acid chain: Collagen, type I, alpha 1b (1029 aa).

Residues Q1–H990 are disordered. The segment covering P13–S33 has biased composition (pro residues). Positions S34–S57 are enriched in low complexity. The segment covering N67–E81 has biased composition (basic and acidic residues). 3 stretches are compositionally biased toward low complexity: residues R82 to R91, V120 to R129, and S136 to P147. Gly residues predominate over residues P163–G182. 3 stretches are compositionally biased toward low complexity: residues A199–A223, A233–A267, and E299–P309. Over residues G310–G322 the composition is skewed to gly residues. Composition is skewed to low complexity over residues E323–K351 and V429–T465. The span at G466–G477 shows a compositional bias: gly residues. Low complexity predominate over residues P478–A497. Gly residues-rich tracts occupy residues G498–G507 and G531–G540. Low complexity-rich tracts occupy residues V571–A580 and A593–A620. Composition is skewed to gly residues over residues G621–G630 and G645–G654. 5 stretches are compositionally biased toward low complexity: residues A655–V665, E694–D722, P731–Q743, A830–K839, and S855–A869. A compositionally biased stretch (basic and acidic residues) spans K870–G884. The segment covering P906–P934 has biased composition (low complexity). Pro residues predominate over residues A952–P967. Residues T999–L1029 enclose the Fibrillar collagen NC1 domain.

It belongs to the fibrillar collagen family.

The protein localises to the secreted. It localises to the extracellular space. Its subcellular location is the extracellular matrix. The protein is Collagen, type I, alpha 1b of Epinephelus aeneus (White grouper).